The primary structure comprises 365 residues: DNA replication and repair protein RecF (365 aa).

30–37 (GRNAQGKT) is an ATP binding site.

Belongs to the RecF family.

The protein localises to the cytoplasm. Functionally, the RecF protein is involved in DNA metabolism; it is required for DNA replication and normal SOS inducibility. RecF binds preferentially to single-stranded, linear DNA. It also seems to bind ATP. The protein is DNA replication and repair protein RecF of Streptococcus pneumoniae serotype 2 (strain D39 / NCTC 7466).